Here is a 286-residue protein sequence, read N- to C-terminus: MEGKEEDVRLGANKFSERQPIGTAAQSDKGYKEPPPAPLFEPGELTSWSFYRAGIAEFMATFLFLYITILTVMGVVKSNSKCSTVGIQGIAWAFGGMIFALVYCTAGISGGHINPAVTFGLFLARKLSLTRALFYMVMQCLGAICGAGVVKGYQKGLYESNGGGANVVAPGYTKGDGLGAEIVGTFILVYTVFSATDAKRNARDSHVPILAPLPIGFAVFLVHLATIPITGTGINPARSLGAAIIYNKKHAWDDHWIFWVGPFIGAALAAIYHQIVIRAIPFKSRP.

A disordered region spans residues 1 to 34 (MEGKEEDVRLGANKFSERQPIGTAAQSDKGYKEP). The Cytoplasmic portion of the chain corresponds to 1–54 (MEGKEEDVRLGANKFSERQPIGTAAQSDKGYKEPPPAPLFEPGELTSWSFYRAG). A helical transmembrane segment spans residues 55–75 (IAEFMATFLFLYITILTVMGV). Residues 76-88 (VKSNSKCSTVGIQ) are Extracellular-facing. The helical transmembrane segment at 89–109 (GIAWAFGGMIFALVYCTAGIS) threads the bilayer. The Cytoplasmic segment spans residues 110–131 (GGHINPAVTFGLFLARKLSLTR). The NPA 1 signature appears at 114 to 116 (NPA). A helical membrane pass occupies residues 132 to 152 (ALFYMVMQCLGAICGAGVVKG). Residues 153 to 174 (YQKGLYESNGGGANVVAPGYTK) are Extracellular-facing. The chain crosses the membrane as a helical span at residues 175 to 195 (GDGLGAEIVGTFILVYTVFSA). Residues 196-208 (TDAKRNARDSHVP) lie on the Cytoplasmic side of the membrane. The chain crosses the membrane as a helical span at residues 209-229 (ILAPLPIGFAVFLVHLATIPI). The Extracellular portion of the chain corresponds to 230–256 (TGTGINPARSLGAAIIYNKKHAWDDHW). The short motif at 235 to 237 (NPA) is the NPA 2 element. Residues 257-277 (IFWVGPFIGAALAAIYHQIVI) traverse the membrane as a helical segment. At 278-286 (RAIPFKSRP) the chain is on the cytoplasmic side.

This sequence belongs to the MIP/aquaporin (TC 1.A.8) family. PIP (TC 1.A.8.11) subfamily. As to expression, expressed in leaves, roots, stems, flowers and fruits, with highest levels in roots.

Its subcellular location is the cell membrane. In terms of biological role, water channel required to facilitate the transport of water across cell membrane; mercury-insensitive. Promotes primary root elongation and root hair formation. Contributes to the tolerance to multiple abiotic stresses including salt (NaCl), cold and water deprivation, by modulating cytosolic K(+)/Na(+) ratio, maintaining osmotic balance, and reducing membrane injury (e.g. oxidative injury). Also regulates the expression of abscisic acid (ABA)-responsive genes during dehydration and salt stresses. The sequence is that of Aquaporin PIP1-1 from Musa acuminata (Banana).